The sequence spans 162 residues: E3 ubiquitin-protein ligase LAP (162 aa).

At 1-78 the chain is on the cytoplasmic side; sequence MEGSDNTNTH…RWKCSFMYCN (78 aa). The RING-CH-type zinc finger occupies 3–61; the sequence is GSDNTNTHCWICKDEYNVSTNFCNCKNEFKIVHKNCLEEWINFSHNTKCKICNGKYNIK. C11, C14, C25, C27, H35, C38, C51, and C54 together coordinate Zn(2+). Residues 79 to 99 traverse the membrane as a helical segment; the sequence is VPAICVSLICLLLLPLTILLV. Topologically, residues 100–121 are lumenal; sequence KFNLKSMLENIENRDLIALISA. The chain crosses the membrane as a helical span at residues 122–142; sequence MAYSLPCVVGFITVVHILIAL. At 143–162 the chain is on the cytoplasmic side; it reads YDYYLAAKSDNTTYQVYEYI.

The protein belongs to the poxviridae LAP protein family.

The protein localises to the host membrane. It is found in the host Golgi apparatus. Its subcellular location is the host trans-Golgi network membrane. It localises to the host early endosome membrane. The enzyme catalyses S-ubiquitinyl-[E2 ubiquitin-conjugating enzyme]-L-cysteine + [acceptor protein]-L-lysine = [E2 ubiquitin-conjugating enzyme]-L-cysteine + N(6)-ubiquitinyl-[acceptor protein]-L-lysine.. Functionally, E3 ubiquitin-protein ligase which promotes ubiquitination and subsequent degradation of host MHC-I and CD4 molecules, presumably to prevent lysis of infected cells by cytotoxic T-lymphocytes and NK cell. Binds target molecules through transmembrane interaction. The result of this ubiquitination is the enhancement of the endocytosis of the target chain and the delivery to the lysosome, where it is proteolytically destroyed. The polypeptide is E3 ubiquitin-protein ligase LAP (LW010) (Lumpy skin disease virus (LSDV)).